The following is a 244-amino-acid chain: Orotidine 5'-phosphate decarboxylase (244 aa).

Residues aspartate 10, lysine 32, 59-68 (DLKLHDIPNT), threonine 122, arginine 184, glutamine 193, glycine 213, and arginine 214 contribute to the substrate site. Catalysis depends on lysine 61, which acts as the Proton donor.

It belongs to the OMP decarboxylase family. Type 1 subfamily. As to quaternary structure, homodimer.

The catalysed reaction is orotidine 5'-phosphate + H(+) = UMP + CO2. It participates in pyrimidine metabolism; UMP biosynthesis via de novo pathway; UMP from orotate: step 2/2. Catalyzes the decarboxylation of orotidine 5'-monophosphate (OMP) to uridine 5'-monophosphate (UMP). This Bacillus caldolyticus protein is Orotidine 5'-phosphate decarboxylase.